The primary structure comprises 374 residues: Glutamate 5-kinase (374 aa).

K9 lines the ATP pocket. Substrate-binding residues include S49, D136, and N148. ATP is bound by residues 168-169 (TD) and 210-216 (TGGMRSK). In terms of domain architecture, PUA spans 276–354 (AGMITVDSGA…EEARQYSYLH (79 aa)).

Belongs to the glutamate 5-kinase family.

Its subcellular location is the cytoplasm. It catalyses the reaction L-glutamate + ATP = L-glutamyl 5-phosphate + ADP. It participates in amino-acid biosynthesis; L-proline biosynthesis; L-glutamate 5-semialdehyde from L-glutamate: step 1/2. Catalyzes the transfer of a phosphate group to glutamate to form L-glutamate 5-phosphate. In Geobacillus kaustophilus (strain HTA426), this protein is Glutamate 5-kinase.